The primary structure comprises 1391 residues: CAP-Gly domain-containing linker protein 1 (1391 aa).

The tract at residues 1 to 53 (MSMLKPSGLKAPTKILKPGSTALKTPAAAAAPVEKTIPSEKASGPPSSETQEE) is disordered. Ser48 is modified (phosphoserine). Residue Thr50 is modified to Phosphothreonine. Positions 78–120 (GETQFAPGQWAGIVLDEPIGKNDGSVAGVRYFQCEPLKGIFTR) constitute a CAP-Gly 1 domain. The interval 97 to 101 (GKNDG) is important for tubulin binding. The segment at 129–182 (QAEDEANGLQAAPGRTASPLSTAAATMVSSSPATPSNIPHKPSQSTAKEPSATP) is disordered. Ser146 is modified (phosphoserine). Over residues 146-182 (SPLSTAAATMVSSSPATPSNIPHKPSQSTAKEPSATP) the composition is skewed to polar residues. Thr181 is subject to Phosphothreonine. 4 positions are modified to phosphoserine: Ser194, Ser196, Ser199, and Ser203. One can recognise a CAP-Gly 2 domain in the interval 231 to 273 (GETDFAKGEWCGVELDEPLGKNDGAVAGTRYFQCQPKYGLFAP). Over residues 302–331 (TPASLKRSPSASSLSSMSSVASSVSSKPSR) the composition is skewed to low complexity. The segment at 302–336 (TPASLKRSPSASSLSSMSSVASSVSSKPSRTGLLT) is disordered. Ser309 is subject to Phosphoserine. Ser311 carries the phosphoserine; by PKA modification. Ser314, Ser347, and Ser1189 each carry phosphoserine. Residues 349 to 1306 (TTALQEALKE…VEMMSEAALN (958 aa)) adopt a coiled-coil conformation. The interval 1251–1272 (KRQLSSSSGNTDAQAEEDERAQ) is disordered. Position 1317 is a phosphoserine (Ser1317). Residues 1370–1387 (PYCEICEMFGHWATNCND) form a CCHC-type zinc finger.

In terms of assembly, interacts with MTOR; phosphorylates and regulates CLIP1. Interacts (via CAP-Gly domains) with tubulin. Interacts with SLAIN2. Interacts with TUBA1B, MAPRE1 and MAPRE3. Interacts (via zinc finger) with DCTN1. Binds preferentially to tyrosinated microtubules, and only marginally to detyrosinated microtubules. In terms of processing, phosphorylated. Phosphorylation induces conformational changes by increasing the affinity of the N-terminus for C-terminus, resulting in inhibition of its function thus decreasing its binding to microtubules and DCTN1. Exhibits a folded, autoinhibited conformation when phosphorylated and an open conformation when dephosphorylated with increased binding affinity to microtubules and DCTN1. Phosphorylation regulates its recruitment to tyrosinated microtubules and the recruitment of vesicular cargo to microtubules in neurons. Phosphorylation by MTOR may positively regulate CLIP1 association with microtubules. Expressed in the testes (at protein level).

Its subcellular location is the cytoplasm. The protein localises to the cytoskeleton. The protein resides in the cytoplasmic vesicle membrane. It is found in the cell projection. It localises to the ruffle. Functionally, binds to the plus end of microtubules and regulates the dynamics of the microtubule cytoskeleton. Promotes microtubule growth and microtubule bundling. Links cytoplasmic vesicles to microtubules and thereby plays an important role in intracellular vesicle trafficking. Plays a role macropinocytosis and endosome trafficking. The chain is CAP-Gly domain-containing linker protein 1 (Clip1) from Mus musculus (Mouse).